Reading from the N-terminus, the 502-residue chain is Nucleoside transporter 2 (502 aa).

Over 1–30 (MTTSSDSAMVNHTPSPWYKFGFKSFAEFNT) the chain is Cytoplasmic. A helical transmembrane segment spans residues 31 to 51 (YVTFVFLGMSIMMVASAVTSA). Residues 52 to 81 (PDFLTRYYVYATGDPDAVAETPLFWNNANT) are Extracellular-facing. The chain crosses the membrane as a helical span at residues 82–102 (FYNAGTYVLQVLTELFSLTPF). Over 103–111 (MRRIPLSVR) the chain is Cytoplasmic. Residues 112 to 132 (LFVGLGIPFAELLLIIIVPAA) traverse the membrane as a helical segment. Residues 133 to 137 (TIKSQ) are Extracellular-facing. Residues 138–158 (HGAIAVIMVVACVGGFSKALC) form a helical membrane-spanning segment. The Cytoplasmic segment spans residues 159-178 (DSCTNALVGPFPTKFMNGAQ). Residues 179 to 199 (WGLTVIALLMSIIQIILKVSM) form a helical membrane-spanning segment. The Extracellular segment spans residues 200 to 210 (GTSFHDILTMS). The helical transmembrane segment at 211–231 (RIYFGICIGIQLFAIFELAIL) threads the bilayer. Residues 232 to 352 (RFNPFAQKYI…SVFKRVYPML (121 aa)) are Cytoplasmic-facing. Positions 252 to 273 (AQNNESTLEETAPSMNEPAAGD) are disordered. Residues 353–373 (VCVFLIYFTSLLTFPGVFFLV) traverse the membrane as a helical segment. Residues 374-380 (STTSGWY) are Extracellular-facing. The chain crosses the membrane as a helical span at residues 381 to 401 (MTVIVTLFNAGDFISRMVLMF). Topologically, residues 402–408 (RPLRPSP) are cytoplasmic. Residues 409 to 429 (KVVVAGTLGRLIIIPFLVLCV) form a helical membrane-spanning segment. Over 430–436 (RGIIRGE) the chain is Extracellular. The chain crosses the membrane as a helical span at residues 437–457 (ALPYVLITLLGLTNGYFGCMA). Residues 458-477 (CIHCPRTTTLRYAGERSLAA) are Cytoplasmic-facing. The helical transmembrane segment at 478 to 498 (MLSGISIMLGLCFGSNLSLAI) threads the bilayer. Topologically, residues 499-502 (TLTH) are extracellular.

This sequence belongs to the SLC29A/ENT transporter (TC 2.A.57) family.

It localises to the cell membrane. It catalyses the reaction inosine(in) = inosine(out). The catalysed reaction is guanosine(in) = guanosine(out). Its function is as follows. High affinity transporter for inosine and guanosine. In Crithidia fasciculata, this protein is Nucleoside transporter 2.